A 919-amino-acid chain; its full sequence is Hyphally regulated cell wall protein 1 (919 aa).

The N-terminal stretch at 1 to 20 is a signal peptide; sequence MKVVSNFIFTILLTLNLSAA. A glycan (N-linked (GlcNAc...) asparagine) is linked at Asn236. The segment at 332–483 is disordered; sequence SAPESESDLN…QSITSSPGQS (152 aa). Over residues 344-392 the composition is skewed to low complexity; the sequence is TTSSIETSSYSSAATESSVVSESSSAVDSLTSSSLSSKSESSDVVSSTT. A compositionally biased stretch (polar residues) spans 393 to 414; sequence NIESSSTAIETTMNSESSTDAG. The segment covering 415 to 475 has biased composition (low complexity); that stretch reads SSSISQSESS…SNALSSTEQS (61 aa). 10 N-linked (GlcNAc...) asparagine glycosylation sites follow: Asn449, Asn488, Asn580, Asn585, Asn607, Asn619, Asn631, Asn639, Asn647, and Asn693. The span at 567–590 shows a compositional bias: low complexity; the sequence is DATTTTTTSTGGDNSTGGNESGSN. Residues 567–839 are disordered; sequence DATTTTTTST…VANPVTTSTE (273 aa). 2 stretches are compositionally biased toward gly residues: residues 607–665 and 675–707; these read NGSG…GSGS and EGSG…GSGS. Low complexity predominate over residues 708–724; it reads QSGSESGSNSGSNEGSN. Positions 725-783 are enriched in gly residues; the sequence is PGAGNGSNEGSGQGSGNGSEAGSGQGSGPNNGSGSGHNDGSGSGSNQGSNPGAGSGSGS. Residues Asn729, Asn741, and Asn755 are each glycosylated (N-linked (GlcNAc...) asparagine). Low complexity predominate over residues 784 to 798; that stretch reads ESGSNAGSHSGSNEG. A compositionally biased stretch (basic and acidic residues) spans 799 to 811; that stretch reads AKTDSIEGFHTES. A compositionally biased stretch (polar residues) spans 823 to 833; the sequence is ATVTGNSVANP. Residues Asn879 and Asn895 are each glycosylated (N-linked (GlcNAc...) asparagine). A lipid anchor (GPI-anchor amidated asparagine) is attached at Asn895. The propeptide at 896-919 is removed in mature form; the sequence is GSSIVTGGKSILFGLIVSMVVLFM.

The protein belongs to the HYR1/IFF family. Component of a multiprotein complex of 250 kDa composed of at least HYR1, MP65, and PRA1. The GPI-anchor is attached to the protein in the endoplasmic reticulum and serves to target the protein to the cell surface. There, the glucosamine-inositol phospholipid moiety is cleaved off and the GPI-modified mannoprotein is covalently attached via its lipidless GPI glycan remnant to the 1,6-beta-glucan of the outer cell wall layer.

The protein localises to the secreted. The protein resides in the cell wall. It localises to the membrane. Functionally, GPI-anchored hyphal cell wall protein required for hyphal growth and virulence. Involved in innate immune cell evasion through conferring resistance to neutrophil killing. Binds kininogen, the proteinaceous kinin precursor, and contributes to trigger the kinin-forming cascade on the cell surface. Production of kinins is often involved in the human host defense against microbial infections. In Candida albicans (strain SC5314 / ATCC MYA-2876) (Yeast), this protein is Hyphally regulated cell wall protein 1 (HYR1).